A 513-amino-acid polypeptide reads, in one-letter code: uncharacterized protein (513 aa).

The CYTH domain maps to histidine 11–threonine 219. The region spanning proline 228–lysine 506 is the CHAD domain.

This is an uncharacterized protein from Mycobacterium tuberculosis (strain ATCC 25618 / H37Rv).